Here is a 386-residue protein sequence, read N- to C-terminus: Succinate--CoA ligase [ADP-forming] subunit beta (386 aa).

Residues 9–244 (KEVLRKYGVV…LDEEDADEIE (236 aa)) form the ATP-grasp domain. Residues lysine 46, 53–55 (GRG), glutamate 99, alanine 102, and glutamate 107 contribute to the ATP site. The Mg(2+) site is built by asparagine 199 and aspartate 213. Substrate-binding positions include asparagine 264 and 321 to 323 (GIM).

It belongs to the succinate/malate CoA ligase beta subunit family. As to quaternary structure, heterotetramer of two alpha and two beta subunits. The cofactor is Mg(2+).

It catalyses the reaction succinate + ATP + CoA = succinyl-CoA + ADP + phosphate. It carries out the reaction GTP + succinate + CoA = succinyl-CoA + GDP + phosphate. It participates in carbohydrate metabolism; tricarboxylic acid cycle; succinate from succinyl-CoA (ligase route): step 1/1. Functionally, succinyl-CoA synthetase functions in the citric acid cycle (TCA), coupling the hydrolysis of succinyl-CoA to the synthesis of either ATP or GTP and thus represents the only step of substrate-level phosphorylation in the TCA. The beta subunit provides nucleotide specificity of the enzyme and binds the substrate succinate, while the binding sites for coenzyme A and phosphate are found in the alpha subunit. This is Succinate--CoA ligase [ADP-forming] subunit beta from Azoarcus sp. (strain BH72).